The sequence spans 77 residues: Translation initiation factor IF-1, chloroplastic (77 aa).

Residues 1–71 (MKEQKWIHEG…TRGRIIYRLR (71 aa)) form the S1-like domain.

Belongs to the IF-1 family. In terms of assembly, component of the 30S ribosomal translation pre-initiation complex which assembles on the 30S ribosome in the order IF-2 and IF-3, IF-1 and N-formylmethionyl-tRNA(fMet); mRNA recruitment can occur at any time during PIC assembly.

The protein localises to the plastid. It localises to the chloroplast. Functionally, one of the essential components for the initiation of protein synthesis. Stabilizes the binding of IF-2 and IF-3 on the 30S subunit to which N-formylmethionyl-tRNA(fMet) subsequently binds. Helps modulate mRNA selection, yielding the 30S pre-initiation complex (PIC). Upon addition of the 50S ribosomal subunit IF-1, IF-2 and IF-3 are released leaving the mature 70S translation initiation complex. This is Translation initiation factor IF-1, chloroplastic from Antirrhinum majus (Garden snapdragon).